The following is a 388-amino-acid chain: MRYLTAGESHGPSLTAIIEGIPAGLKLSAKDINEDLKRRQGGYGRGNRMKIETDQVIISSGVRHGKTLGSPITLTVTNKDHSKWLDIMSVEDIEERLKQKRRIKHPRPGHADLVGGIKYRFDDLRNALERSSARETTMRVAIGAIAKRILKEIGIEIANHIVVFGGKEITVPDKLTVQQIKVLSSQSQVAIVNPSFEQEIKDYIDSVKKAGDTIGGVIETIVGGVPVGLGSYVHWDRKLDAKIAQAVVSINAFKGVEFGLGFKSGFLKGSQVMDSISWTKDQGYIRQSNNLGGFEGGMTNGEPIIVRGVMKPIPTLYKPLMSVDIDTHEPYRATVERSDPTALPAAGVVMEAVVATVLVTEVLEKFSSDNMYELKEAVKLYRNYVNHF.

NADP(+) contacts are provided by Arg-39 and Arg-45. Residues 130–132 (RSS), 251–252 (NA), Gly-296, 311–315 (KPIPT), and Arg-337 each bind FMN.

Belongs to the chorismate synthase family. In terms of assembly, homotetramer. FMNH2 serves as cofactor.

The catalysed reaction is 5-O-(1-carboxyvinyl)-3-phosphoshikimate = chorismate + phosphate. It participates in metabolic intermediate biosynthesis; chorismate biosynthesis; chorismate from D-erythrose 4-phosphate and phosphoenolpyruvate: step 7/7. Its function is as follows. Catalyzes the anti-1,4-elimination of the C-3 phosphate and the C-6 proR hydrogen from 5-enolpyruvylshikimate-3-phosphate (EPSP) to yield chorismate, which is the branch point compound that serves as the starting substrate for the three terminal pathways of aromatic amino acid biosynthesis. This reaction introduces a second double bond into the aromatic ring system. This chain is Chorismate synthase, found in Streptococcus agalactiae serotype III (strain NEM316).